A 294-amino-acid chain; its full sequence is GTPase Era (294 aa).

Residues 4–170 (KSGFVSVIGR…VEEIFTFLPE (167 aa)) form the Era-type G domain. A G1 region spans residues 12-19 (GRPNVGKS). 12 to 19 (GRPNVGKS) is a binding site for GTP. The interval 38 to 42 (QTTRN) is G2. The G3 stretch occupies residues 59-62 (DTPG). GTP contacts are provided by residues 59–63 (DTPGI) and 121–124 (NKID). The tract at residues 121 to 124 (NKID) is G4. Residues 149–151 (ISA) form a G5 region. Residues 201–278 (TREEVPYGVA…YLDLWVKIEK (78 aa)) enclose the KH type-2 domain.

Belongs to the TRAFAC class TrmE-Era-EngA-EngB-Septin-like GTPase superfamily. Era GTPase family. In terms of assembly, monomer.

The protein localises to the cytoplasm. It localises to the cell inner membrane. An essential GTPase that binds both GDP and GTP, with rapid nucleotide exchange. Plays a role in 16S rRNA processing and 30S ribosomal subunit biogenesis and possibly also in cell cycle regulation and energy metabolism. This Halothermothrix orenii (strain H 168 / OCM 544 / DSM 9562) protein is GTPase Era.